The sequence spans 583 residues: Radixin (583 aa).

An FERM domain is found at 5–295 (INVRVTTMDA…GNHELYMRRR (291 aa)). A 1,2-diacyl-sn-glycero-3-phospho-(1D-myo-inositol) is bound by residues 60–63 (KLNK) and Lys-278. Disordered regions lie at residues 310–336 (REEK…AEKE) and 436–527 (KKKE…VKKQ). Basic and acidic residues-rich tracts occupy residues 436–447 (KKKEEEASEWQH) and 455–464 (DLEKTKEELK). A compositionally biased stretch (pro residues) spans 469–480 (APPPPPPPPVIP). Basic and acidic residues-rich tracts occupy residues 483–492 (ENEHDEHDEN) and 506–525 (MNHR…ERVK).

It localises to the cell membrane. The protein resides in the cytoplasm. It is found in the cytoskeleton. Its function is as follows. Probably plays a crucial role in the binding of the barbed end of actin filaments to the plasma membrane. The chain is Radixin (RDX) from Gallus gallus (Chicken).